Here is a 284-residue protein sequence, read N- to C-terminus: UPF0354 protein SERP1303 (284 aa).

It belongs to the UPF0354 family.

The sequence is that of UPF0354 protein SERP1303 from Staphylococcus epidermidis (strain ATCC 35984 / DSM 28319 / BCRC 17069 / CCUG 31568 / BM 3577 / RP62A).